The chain runs to 186 residues: Adrenodoxin, mitochondrial (186 aa).

A mitochondrion-targeting transit peptide spans 1 to 58 (MAARLLRVASAALGDTAGRWRLLARPRAGAGGLRGSRGPGLGGGAVATRTLSVSGRAQ). Residue Ser-61 is modified to Phosphoserine. Lys-64 is modified (N6-acetyllysine; alternate). An N6-succinyllysine; alternate modification is found at Lys-64. In terms of domain architecture, 2Fe-2S ferredoxin-type spans 65–169 (ITVHFINRDG…NMTVRVPDAV (105 aa)). [2Fe-2S] cluster-binding residues include Cys-104, Cys-110, Cys-113, and Cys-150. Position 156 is an N6-succinyllysine (Lys-156). Ser-175 bears the Phosphoserine mark.

This sequence belongs to the adrenodoxin/putidaredoxin family. In terms of assembly, interacts with CYP11A1. Requires [2Fe-2S] cluster as cofactor. In terms of tissue distribution, detected in adrenal cortex and corpus luteum (at protein level).

It is found in the mitochondrion matrix. Functionally, essential for the synthesis of various steroid hormones. Participates in the reduction of mitochondrial cytochrome P450 for steroidogenesis. Transfers electrons from adrenodoxin reductase to CYP11A1, a cytochrome P450 that catalyzes cholesterol side-chain cleavage to produce pregnenolone, the precursor of most steroid hormones. Does not form a ternary complex with adrenodoxin reductase and CYP11A1 but shuttles between the two enzymes to transfer electrons. The polypeptide is Adrenodoxin, mitochondrial (FDX1) (Bos taurus (Bovine)).